We begin with the raw amino-acid sequence, 315 residues long: Aldo-keto reductase family 4 member C11 (315 aa).

N-acetylalanine is present on Ala2. Residues 23–24 and Asp47 contribute to the NADP(+) site; that span reads TW. Catalysis depends on Tyr52, which acts as the Proton donor. NADP(+) contacts are provided by residues His114, 158 to 159, Gln180, 207 to 213, 256 to 258, and 262 to 266; these read SN, SPLGSPG, KST, and RIREN. Phosphoserine is present on Ser295.

It belongs to the aldo/keto reductase family.

Functionally, oxidoreductase that may act on a broad range of substrates such as ketosteroids, aldehydes, ketones and sugars. The chain is Aldo-keto reductase family 4 member C11 (AKR4C11) from Arabidopsis thaliana (Mouse-ear cress).